The chain runs to 337 residues: MSQPPAAHVPVLYTQVLDGLQVTENGTYLDGTFGRGGHARGVLEHLGPGGRLLVMDKDPEAIAVAEQTFGGDARVSIHRGSFAGLGQVVAAATVDGILLDLGVSSPQLEVAGRGFSFGKDGPLDMRMDPDSGQSAAQWLAQATDREIADVLWTYGEERQSRRIARAIVARRAEQPLLRTAQLADLIASVMPRGDSKTHPATRSFQAIRIYINRELDDLETGLDAALAALKPGGRLAVISFHSLEDRIVKQFMARYAKAPPSNRRLPEAQPFVPTLQLVSGAIKADDAELNVNPRARSAVLRVAEKLELRIGDSLLERRSGRIPNPQSPIPASQGDAR.

S-adenosyl-L-methionine-binding positions include glycine 36–histidine 38, aspartate 56, phenylalanine 82, aspartate 100, and glutamine 107. A disordered region spans residues arginine 317 to arginine 337.

Belongs to the methyltransferase superfamily. RsmH family.

The protein localises to the cytoplasm. The catalysed reaction is cytidine(1402) in 16S rRNA + S-adenosyl-L-methionine = N(4)-methylcytidine(1402) in 16S rRNA + S-adenosyl-L-homocysteine + H(+). Its function is as follows. Specifically methylates the N4 position of cytidine in position 1402 (C1402) of 16S rRNA. This is Ribosomal RNA small subunit methyltransferase H from Xanthomonas oryzae pv. oryzae (strain KACC10331 / KXO85).